The following is a 506-amino-acid chain: Probable Xaa-Pro aminopeptidase BDBG_08406 (506 aa).

4 residues coordinate Mn(2+): D285, D296, E433, and E471.

It belongs to the peptidase M24B family. The cofactor is Mn(2+).

It carries out the reaction Release of any N-terminal amino acid, including proline, that is linked to proline, even from a dipeptide or tripeptide.. Catalyzes the removal of a penultimate prolyl residue from the N-termini of peptides. In Blastomyces gilchristii (strain SLH14081) (Blastomyces dermatitidis), this protein is Probable Xaa-Pro aminopeptidase BDBG_08406.